A 285-amino-acid chain; its full sequence is MTWPEKTLPTTDASEKRSLGAGVFRRCDGCSHTHDAAELARTFEVCSQCGHHHKLDADGWRRLLLDDGELAAWDEHLVPNDPLRFSDGKSYRDRVAALHKKGRAKEAIEIGRGRLGGRDIAYGAFVFAFMGGSMGSVVGEKITRLFERATREELPVVLLQASGGARMQEGILSLMQMAKSVSALERYRKARLPFLSVLLHPTTGGVAASFAFLGDANIAEPKALIGFAGPRVIENTIRQTLPAGFQRSEFLLDHGMVDAIVPRPEMKAYIGTLLQHLTAGRRARR.

Positions 23–285 (VFRRCDGCSH…HLTAGRRARR (263 aa)) constitute a CoA carboxyltransferase N-terminal domain. Cys-27, Cys-30, Cys-46, and Cys-49 together coordinate Zn(2+). Residues 27–49 (CDGCSHTHDAAELARTFEVCSQC) form a C4-type zinc finger.

The protein belongs to the AccD/PCCB family. In terms of assembly, acetyl-CoA carboxylase is a heterohexamer composed of biotin carboxyl carrier protein (AccB), biotin carboxylase (AccC) and two subunits each of ACCase subunit alpha (AccA) and ACCase subunit beta (AccD). Zn(2+) is required as a cofactor.

The protein localises to the cytoplasm. It carries out the reaction N(6)-carboxybiotinyl-L-lysyl-[protein] + acetyl-CoA = N(6)-biotinyl-L-lysyl-[protein] + malonyl-CoA. It participates in lipid metabolism; malonyl-CoA biosynthesis; malonyl-CoA from acetyl-CoA: step 1/1. Functionally, component of the acetyl coenzyme A carboxylase (ACC) complex. Biotin carboxylase (BC) catalyzes the carboxylation of biotin on its carrier protein (BCCP) and then the CO(2) group is transferred by the transcarboxylase to acetyl-CoA to form malonyl-CoA. This chain is Acetyl-coenzyme A carboxylase carboxyl transferase subunit beta, found in Sorangium cellulosum (strain So ce56) (Polyangium cellulosum (strain So ce56)).